Here is a 522-residue protein sequence, read N- to C-terminus: MKGFLLVALPVLFLSLSTQVFGEPSIPSAAQIVQNANRLLAEGSYSAAARAYGEAIELDPTGYANYYKRATAYLSMGRHNAALDDFEQILRINPGFVQAHYQRAKILAKEGDFAKAQYELKAYVRTKSDSEAEELSHLLTVGEAAEKSALQAFEKGKWQVCVEHSTKALEVGPNSEKLRRLRVNCATELGDINMVYGDLSRLASLDPSTTYLPLQLSNIAYFIRASSQAAAHIKQCLHFDPDSKPCKAVHKTIRSLEKDAARVRNFIESGTYRQAIKILDGDDGLLVRFEKALDDATKPKDGLPPYLAPQFHPKKNSQMRLDLYALACKASVMANDFGEKGAHWCEETMSMNEENVDSWISRGERLLRVEKWEEAMRAVEKAFELSGRSQDILPRVQKAQRLLKQSKQKDYYKVLGVPRDADERAIKKAFRKAAKLAHPDVGGSEEKMAALNEAYEVLSNTELRQRYDNGDDPNDPTGGQQHNPFAHHGGGMPFQFFQQGGGFQGFHQGFPGGGQKMHFQWN.

Positions 1-22 (MKGFLLVALPVLFLSLSTQVFG) are cleaved as a signal peptide. TPR repeat units lie at residues 29–62 (AAQIVQNANRLLAEGSYSAAARAYGEAIELDPTG), 63–96 (YANYYKRATAYLSMGRHNAALDDFEQILRINPGF), 97–130 (VQAHYQRAKILAKEGDFAKAQYELKAYVRTKSDS), 142–175 (GEAAEKSALQAFEKGKWQVCVEHSTKALEVGPNS), 210–243 (TYLPLQLSNIAYFIRASSQAAAHIKQCLHFDPDS), 256–289 (LEKDAARVRNFIESGTYRQAIKILDGDDGLLVRF), and 356–389 (VDSWISRGERLLRVEKWEEAMRAVEKAFELSGRS). Residues 410–471 (DYYKVLGVPR…ELRQRYDNGD (62 aa)) form the J domain. Positions 465–494 (QRYDNGDDPNDPTGGQQHNPFAHHGGGMPF) are disordered.

It is found in the endoplasmic reticulum lumen. Endoplasmic reticulum co-chaperone crucial for survival and virulence factor production at elevated temperatures representative of febrile patients during infection. Contributes to virulence in a mouse model of cryptococcosis. With chaperone CNE1, coordinately maintains ER homeostasis and contributes to maintenance of cell wall architecture. The sequence is that of Tetratricopeptide repeat and J domain-containing co-chaperone DNJ1 from Cryptococcus neoformans var. grubii serotype A (strain H99 / ATCC 208821 / CBS 10515 / FGSC 9487) (Filobasidiella neoformans var. grubii).